The chain runs to 749 residues: Disintegrin and metalloproteinase domain-containing protein 10 (749 aa).

A signal peptide spans 1–18 (MVLPTVLILLLSWAAGLG). A propeptide spanning residues 19-214 (GQYGNPLNKY…MGPELLRKKR (196 aa)) is cleaved from the precursor. Residues 171-178 (GGCADHSV) carry the Cysteine switch motif. Residue C173 participates in Zn(2+) binding. Residues 215 to 673 (TTLAERNTCQ…SPQLYENIAE (459 aa)) are Extracellular-facing. The Peptidase M12B domain maps to 221–457 (NTCQLYIQTD…KRNNCFVESG (237 aa)). 17 cysteine pairs are disulfide-bonded: C223/C314, C345/C452, C400/C436, C461/C496, C472/C485, C474/C480, C484/C516, C504/C512, C511/C537, C525/C544, C531/C563, C556/C568, C573/C599, C581/C608, C583/C598, C595/C640, and C633/C646. 2 N-linked (GlcNAc...) asparagine glycosylation sites follow: N268 and N279. A Zn(2+)-binding site is contributed by H384. The active site involves E385. Zn(2+) contacts are provided by H388 and H394. An N-linked (GlcNAc...) asparagine glycan is attached at N440. The 95-residue stretch at 458–552 (QPICGNGMVE…LCPASDPKPN (95 aa)) folds into the Disintegrin domain. N-linked (GlcNAc...) asparagine glycosylation is present at N552. The helical transmembrane segment at 674 to 697 (WIVAHWWAVLLMGIALIMLMAGFI) threads the bilayer. The Cytoplasmic portion of the chain corresponds to 698 to 749 (KICSVHTPSSNPKLPPPKPLPGTLKRRRPPQPIQQPPRQRPRESYQMGHMRR). The tract at residues 705-749 (PSSNPKLPPPKPLPGTLKRRRPPQPIQQPPRQRPRESYQMGHMRR) is disordered. The SH3-binding signature appears at 709 to 716 (PKLPPPKP). The residue at position 720 (T720) is a Phosphothreonine. Positions 723 to 729 (RRRPPQP) match the SH3-binding motif. The segment at 735 to 749 (RQRPRESYQMGHMRR) is interaction with AP2A1, AP2A2 and AP2M1.

In terms of assembly, forms a ternary EFNA5-EPHA3-ADAM10 complex mediating EFNA5 extracellular domain shedding by ADAM10 which regulates the EFNA5-EPHA3 complex internalization and function, the cleavage occurs in trans, with ADAM10 and its substrate being on the membranes of opposing cells. Interacts with the clathrin adapter AP2 complex subunits AP2A1, AP2A2, AP2B1, and AP2M1; this interaction facilitates ADAM10 endocytosis from the plasma membrane during long-term potentiation in hippocampal neurons. Forms a ternary complex composed of ADAM10, EPHA4 and CADH1; within the complex, ADAM10 cleaves CADH1 which disrupts adherens junctions. Interacts with EPHA2. Interacts with NGF in a divalent cation-dependent manner. Interacts with TSPAN14; the interaction promotes ADAM10 maturation and cell surface expression. Interacts with TSPAN5, TSPAN10, TSPAN14, TSPAN15, TSPAN17 and TSPAN33; these interactions regulate ADAM10 substrate specificity, endocytosis and turnover. Interacts (via extracellular domain) with TSPAN33 (via extracellular domain) and (via cytoplasmic domain) with AFDN; interaction with TSPAN33 allows the docking of ADAM10 to zonula adherens through a PDZ11-dependent interaction between TSPAN33 and PLEKHA7 while interaction with AFDN locks ADAM10 at zonula adherens. Interacts with DLG1; this interaction recruits ADAM10 to the cell membrane during long-term depression in hippocampal neurons. Interacts (via extracellular domain) with BACE1 (via extracellular domain). Interacts with FAM171A1. Requires Zn(2+) as cofactor. In terms of processing, the precursor is cleaved by furin and PCSK7. Expressed in brain, kidney, lung, spleen, ovary and testis.

The protein localises to the cell membrane. It localises to the golgi apparatus membrane. It is found in the cytoplasmic vesicle. The protein resides in the clathrin-coated vesicle. Its subcellular location is the cell projection. The protein localises to the axon. It localises to the dendrite. It is found in the cell junction. The protein resides in the adherens junction. Its subcellular location is the cytoplasm. The catalysed reaction is Endopeptidase of broad specificity.. With respect to regulation, catalytically inactive when the propeptide is intact and associated with the mature enzyme. The disintegrin and cysteine-rich regions modulate access of substrates to exerts an inhibitory effect on the cleavage of ADAM10 substrates. Functionally, transmembrane metalloprotease which mediates the ectodomain shedding of a myriad of transmembrane proteins, including adhesion proteins, growth factor precursors and cytokines being essential for development and tissue homeostasis. Associates with six members of the tetraspanin superfamily TspanC8 which regulate its exit from the endoplasmic reticulum and its substrate selectivity. Cleaves the membrane-bound precursor of TNF-alpha at '76-Ala-|-Val-77' to its mature soluble form. Responsible for the proteolytical release of soluble JAM3 from endothelial cells surface. Responsible for the proteolytic release of several other cell-surface proteins, including heparin-binding epidermal growth-like factor, ephrin-A2, CD44, CDH2 and for constitutive and regulated alpha-secretase cleavage of amyloid precursor protein (APP). Contributes to the normal cleavage of the cellular prion protein. Involved in the cleavage of the adhesion molecule L1 at the cell surface and in released membrane vesicles, suggesting a vesicle-based protease activity. Also controls the proteolytic processing of Notch and mediates lateral inhibition during neurogenesis. Required for the development of type 1 transitional B cells into marginal zone B cells, probably by cleaving Notch. Responsible for the FasL ectodomain shedding and for the generation of the remnant ADAM10-processed FasL (FasL APL) transmembrane form. Also cleaves the ectodomain of the integral membrane proteins CORIN and ITM2B. Mediates the proteolytic cleavage of LAG3, leading to release the secreted form of LAG3. Mediates the proteolytic cleavage of IL6R and IL11RA, leading to the release of secreted forms of IL6R and IL11RA. Enhances the cleavage of CHL1 by BACE1. Cleaves NRCAM. Cleaves TREM2, resulting in shedding of the TREM2 ectodomain. Involved in the development and maturation of glomerular and coronary vasculature. During development of the cochlear organ of Corti, promotes pillar cell separation by forming a ternary complex with CADH1 and EPHA4 and cleaving CADH1 at adherens junctions. May regulate the EFNA5-EPHA3 signaling. Regulates leukocyte transmigration as a sheddase for the adherens junction protein VE-cadherin/CDH5 in endothelial cells. The protein is Disintegrin and metalloproteinase domain-containing protein 10 (Adam10) of Rattus norvegicus (Rat).